Reading from the N-terminus, the 553-residue chain is Arylsulfatase K (553 aa).

The first 16 residues, 1-16 (MLLLLVSVVAALALAA), serve as a signal peptide directing secretion. Positions 40 and 80 each coordinate Ca(2+). The active-site Nucleophile is the Cys80. A 3-oxoalanine (Cys) modification is found at Cys80. Residue Asn108 is glycosylated (N-linked (GlcNAc...) asparagine). Lys128 is a substrate binding site. Asn191 is a glycosylation site (N-linked (GlcNAc...) asparagine). His249 serves as a coordination point for substrate. The N-linked (GlcNAc...) asparagine glycan is linked to Asn260. 2 residues coordinate Ca(2+): Asp311 and His312. 3 N-linked (GlcNAc...) asparagine glycosylation sites follow: Asn373, Asn411, and Asn496. Positions 530–553 (SPLASSPTQSTSGSQPTLPQSTSG) are disordered. Residues 534–553 (SSPTQSTSGSQPTLPQSTSG) are compositionally biased toward low complexity.

The protein belongs to the sulfatase family. The cofactor is Ca(2+). In terms of processing, the conversion to 3-oxoalanine (also known as C-formylglycine, FGly), of a serine or cysteine residue in prokaryotes and of a cysteine residue in eukaryotes, is critical for catalytic activity. Post-translationally, the 75-kDa precursor undergoes proteolytic processing to yield a 23 kDa form. N-glycosylated with both high mannose and complex type sugars.

Its subcellular location is the secreted. It localises to the lysosome. The enzyme catalyses an aryl sulfate + H2O = a phenol + sulfate + H(+). The catalysed reaction is Hydrolysis of the 2-sulfate groups of the 2-O-sulfo-D-glucuronate residues of chondroitin sulfate, heparin and heparitin sulfate.. In terms of biological role, catalyzes the hydrolysis of pseudosubstrates such as p-nitrocatechol sulfate and p-nitrophenyl sulfate. Catalyzes the hydrolysis of the 2-sulfate groups of the 2-O-sulfo-D-glucuronate residues of chondroitin sulfate, heparin and heparitin sulfate. Acts selectively on 2-sulfoglucuronate and lacks activity against 2-sulfoiduronate. This is Arylsulfatase K (Arsk) from Mus musculus (Mouse).